The primary structure comprises 418 residues: Nuclear receptor coactivator 6 (418 aa).

Disordered regions lie at residues 1 to 21 and 77 to 98; these read EQIM…QNQS and PPGP…ANND. Residues 1-215 form a TBP/GTF2A-binding region region; sequence EQIMTNQMQG…PPRKKKNCHQ (215 aa). The CREBBP-binding region stretch occupies residues 1–352; the sequence is EQIMTNQMQG…LPVSQNVHPP (352 aa). The segment at 1–418 is NCOA1-binding region; that stretch reads EQIMTNQMQG…YQESPQNSSS (418 aa). Residues 60–214 form an NCOA6IP-binding region region; it reads VSNSPSQVMG…KPPRKKKNCH (155 aa). The span at 84-98 shows a compositional bias: polar residues; it reads MAQQHTDPATTANND. A Phosphoserine modification is found at Ser171. An LXXLL motif motif is present at residues 174 to 178; the sequence is LVNLL. A disordered region spans residues 186–418; sequence HFGVNNKQNN…YQESPQNSSS (233 aa). Residues 190–199 show a composition bias toward low complexity; the sequence is NNKQNNTNAN. Over residues 200-212 the composition is skewed to basic residues; that stretch reads KQKKKKPPRKKKN. Over residues 269–279 the composition is skewed to low complexity; it reads PLQQMPPQLMQ. The span at 282-310 shows a compositional bias: pro residues; it reads APPPQPPQQQPQPQLPQQQPQPQPPPPSQ. Over residues 311 to 336 the composition is skewed to low complexity; it reads PQSQQQQQQQQQQQQQQMMMMLMMQQ. Asymmetric dimethylarginine is present on residues Arg342 and Arg353. The segment covering 358-370 has biased composition (polar residues); the sequence is PDSQRVPMQQSGN. Residue Arg391 is modified to Asymmetric dimethylarginine. The segment covering 399 to 418 has biased composition (polar residues); that stretch reads PLGSNSRKMVYQESPQNSSS.

Monomer and homodimer. Interacts in vitro with the basal transcription factors GTF2A and TBP, suggesting an autonomous transactivation function. Interacts with NCOA1, CRSP3, RBM14, the histone acetyltransferase proteins EP300 and CREBBP, and with methyltransferase proteins NCOA6IP and PRMT2. Component of the MLL2/3 complex (also named ASCOM complex), at least composed of KMT2D/MLL2 or KMT2C/MLL3, ASH2L, RBBP5, WDR5, NCOA6, DPY30, KDM6A, PAXIP1/PTIP, PAGR1 and alpha- and beta-tubulin. Interacts with ZNF335; may enhance ligand-dependent transcriptional activation by nuclear hormone receptors. Phosphorylated.

The protein localises to the nucleus. Its function is as follows. Nuclear receptor coactivator that directly binds nuclear receptors and stimulates the transcriptional activities in a hormone-dependent fashion. Coactivate expression in an agonist- and AF2-dependent manner. May coactivate expression via a remodeling of chromatin and its interaction with histone acetyltransferase proteins. Involved in the coactivation of different nuclear receptors, such as for steroids (GR and ERs), retinoids (RARs and RXRs), thyroid hormone (TRs), vitamin D3 (VDR) and prostanoids (PPARs). Probably functions as a general coactivator, rather than just a nuclear receptor coactivator. May also be involved in the coactivation of the NF-kappa-B pathway. This chain is Nuclear receptor coactivator 6 (Ncoa6), found in Rattus norvegicus (Rat).